We begin with the raw amino-acid sequence, 363 residues long: Aminomethyltransferase (363 aa).

It belongs to the GcvT family. As to quaternary structure, the glycine cleavage system is composed of four proteins: P, T, L and H.

It carries out the reaction N(6)-[(R)-S(8)-aminomethyldihydrolipoyl]-L-lysyl-[protein] + (6S)-5,6,7,8-tetrahydrofolate = N(6)-[(R)-dihydrolipoyl]-L-lysyl-[protein] + (6R)-5,10-methylene-5,6,7,8-tetrahydrofolate + NH4(+). Its function is as follows. The glycine cleavage system catalyzes the degradation of glycine. The polypeptide is Aminomethyltransferase (Thermotoga neapolitana (strain ATCC 49049 / DSM 4359 / NBRC 107923 / NS-E)).